We begin with the raw amino-acid sequence, 199 residues long: Protein-methionine-sulfoxide reductase heme-binding subunit MsrQ (199 aa).

5 helical membrane-spanning segments follow: residues 8–28 (ITWL…WLFW), 82–102 (LWCF…ELGI), 116–136 (PYLT…LTST), 149–169 (FLHN…LWSV), and 171–191 (ILSP…AWRY).

Belongs to the MsrQ family. Heterodimer of a catalytic subunit (MsrP) and a heme-binding subunit (MsrQ). It depends on FMN as a cofactor. Requires heme b as cofactor.

It is found in the cell inner membrane. Its function is as follows. Part of the MsrPQ system that repairs oxidized periplasmic proteins containing methionine sulfoxide residues (Met-O), using respiratory chain electrons. Thus protects these proteins from oxidative-stress damage caused by reactive species of oxygen and chlorine generated by the host defense mechanisms. MsrPQ is essential for the maintenance of envelope integrity under bleach stress, rescuing a wide series of structurally unrelated periplasmic proteins from methionine oxidation. MsrQ provides electrons for reduction to the reductase catalytic subunit MsrP, using the quinone pool of the respiratory chain. The protein is Protein-methionine-sulfoxide reductase heme-binding subunit MsrQ of Enterobacter sp. (strain 638).